The sequence spans 387 residues: 3-ketoacyl-CoA thiolase (387 aa).

The Acyl-thioester intermediate role is filled by Cys-91. Residues His-343 and Cys-373 each act as proton acceptor in the active site.

The protein belongs to the thiolase-like superfamily. Thiolase family. Heterotetramer of two alpha chains (FadB) and two beta chains (FadA).

The protein localises to the cytoplasm. The enzyme catalyses an acyl-CoA + acetyl-CoA = a 3-oxoacyl-CoA + CoA. It participates in lipid metabolism; fatty acid beta-oxidation. Catalyzes the final step of fatty acid oxidation in which acetyl-CoA is released and the CoA ester of a fatty acid two carbons shorter is formed. The sequence is that of 3-ketoacyl-CoA thiolase from Vibrio vulnificus (strain CMCP6).